The following is a 1756-amino-acid chain: Transposon Ty1-BR Gag-Pol polyprotein (1756 aa).

Polar residues-rich tracts occupy residues M1 to P10, T48 to S60, and Q127 to F152. Disordered regions lie at residues M1 to Q93, P126 to P173, and G352 to T421. Residues T153–T165 show a composition bias toward low complexity. The segment at N299–H401 is RNA-binding. A compositionally biased stretch (low complexity) spans N402 to S418. Phosphoserine is present on S416. D461 acts as the For protease activity; shared with dimeric partner in catalysis. The interval N583–C640 is integrase-type zinc finger-like. In terms of domain architecture, Integrase catalytic spans N660–P835. Mg(2+)-binding residues include D671 and D736. Disordered regions lie at residues S956–R1088 and P1142–Y1173. Low complexity predominate over residues S960–T969. 2 stretches are compositionally biased toward polar residues: residues S1005–S1017 and M1031–S1043. Over residues K1044–S1053 the composition is skewed to basic and acidic residues. Residues Y1054–E1082 show a composition bias toward polar residues. The Bipartite nuclear localization signal signature appears at K1179–R1213. Residues N1339–Q1477 form the Reverse transcriptase Ty1/copia-type domain. Mg(2+) contacts are provided by D1347, D1428, D1429, D1611, E1653, and D1686. Positions D1611 to K1753 constitute an RNase H Ty1/copia-type domain.

As to quaternary structure, the capsid protein forms a homotrimer, from which the VLPs are assembled. The protease is a homodimer, whose active site consists of two apposed aspartic acid residues. In terms of processing, initially, virus-like particles (VLPs) are composed of the structural unprocessed proteins Gag and Gag-Pol, and also contain the host initiator methionine tRNA (tRNA(i)-Met) which serves as a primer for minus-strand DNA synthesis, and a dimer of genomic Ty RNA. Processing of the polyproteins occurs within the particle and proceeds by an ordered pathway, called maturation. First, the protease (PR) is released by autocatalytic cleavage of the Gag-Pol polyprotein yielding capsid protein p45 and a Pol-p154 precursor protein. This cleavage is a prerequisite for subsequent processing of Pol-p154 at the remaining sites to release the mature structural and catalytic proteins. Maturation takes place prior to the RT reaction and is required to produce transposition-competent VLPs.

The protein resides in the cytoplasm. It is found in the nucleus. The enzyme catalyses DNA(n) + a 2'-deoxyribonucleoside 5'-triphosphate = DNA(n+1) + diphosphate. It carries out the reaction Endonucleolytic cleavage to 5'-phosphomonoester.. Capsid protein (CA) is the structural component of the virus-like particle (VLP), forming the shell that encapsulates the retrotransposons dimeric RNA genome. The particles are assembled from trimer-clustered units and there are holes in the capsid shells that allow for the diffusion of macromolecules. CA also has nucleocapsid-like chaperone activity, promoting primer tRNA(i)-Met annealing to the multipartite primer-binding site (PBS), dimerization of Ty1 RNA and initiation of reverse transcription. Its function is as follows. The aspartyl protease (PR) mediates the proteolytic cleavages of the Gag and Gag-Pol polyproteins after assembly of the VLP. Functionally, reverse transcriptase/ribonuclease H (RT) is a multifunctional enzyme that catalyzes the conversion of the retro-elements RNA genome into dsDNA within the VLP. The enzyme displays a DNA polymerase activity that can copy either DNA or RNA templates, and a ribonuclease H (RNase H) activity that cleaves the RNA strand of RNA-DNA heteroduplexes during plus-strand synthesis and hydrolyzes RNA primers. The conversion leads to a linear dsDNA copy of the retrotransposon that includes long terminal repeats (LTRs) at both ends. In terms of biological role, integrase (IN) targets the VLP to the nucleus, where a subparticle preintegration complex (PIC) containing at least integrase and the newly synthesized dsDNA copy of the retrotransposon must transit the nuclear membrane. Once in the nucleus, integrase performs the integration of the dsDNA into the host genome. This is Transposon Ty1-BR Gag-Pol polyprotein (TY1B-BR) from Saccharomyces cerevisiae (strain ATCC 204508 / S288c) (Baker's yeast).